We begin with the raw amino-acid sequence, 411 residues long: Arginine biosynthesis bifunctional protein ArgJ (411 aa).

Thr160, Lys186, Thr197, Glu283, Asn406, and Thr411 together coordinate substrate. The active-site Nucleophile is the Thr197.

The protein belongs to the ArgJ family. In terms of assembly, heterotetramer of two alpha and two beta chains.

Its subcellular location is the cytoplasm. It catalyses the reaction N(2)-acetyl-L-ornithine + L-glutamate = N-acetyl-L-glutamate + L-ornithine. It carries out the reaction L-glutamate + acetyl-CoA = N-acetyl-L-glutamate + CoA + H(+). The protein operates within amino-acid biosynthesis; L-arginine biosynthesis; L-ornithine and N-acetyl-L-glutamate from L-glutamate and N(2)-acetyl-L-ornithine (cyclic): step 1/1. Its pathway is amino-acid biosynthesis; L-arginine biosynthesis; N(2)-acetyl-L-ornithine from L-glutamate: step 1/4. Feedback inhibition by L-ornithine. Its function is as follows. Catalyzes two activities which are involved in the cyclic version of arginine biosynthesis: the synthesis of N-acetylglutamate from glutamate and acetyl-CoA as the acetyl donor, and of ornithine by transacetylation between N(2)-acetylornithine and glutamate. The chain is Arginine biosynthesis bifunctional protein ArgJ from Halalkalibacterium halodurans (strain ATCC BAA-125 / DSM 18197 / FERM 7344 / JCM 9153 / C-125) (Bacillus halodurans).